The following is a 384-amino-acid chain: Putative F-box/kelch-repeat protein At3g27910 (384 aa).

The 53-residue stretch at 27–79 folds into the F-box domain; sequence SPTSLPLPDEIIVNCFAYIPRCDYPSLSLVSKTFNRLITSIELNIVRSLFQRT. 4 Kelch repeats span residues 138 to 184, 185 to 235, 237 to 274, and 275 to 323; these read KIYV…IVDG, KIYV…VMNK, IYIM…VIDN, and MLYT…MANH.

This is Putative F-box/kelch-repeat protein At3g27910 from Arabidopsis thaliana (Mouse-ear cress).